The following is a 174-amino-acid chain: ATP-dependent protease subunit HslV (174 aa).

Residue Thr-2 is part of the active site. Gly-157, Cys-160, and Thr-163 together coordinate Na(+).

The protein belongs to the peptidase T1B family. HslV subfamily. As to quaternary structure, a double ring-shaped homohexamer of HslV is capped on each side by a ring-shaped HslU homohexamer. The assembly of the HslU/HslV complex is dependent on binding of ATP.

It localises to the cytoplasm. It carries out the reaction ATP-dependent cleavage of peptide bonds with broad specificity.. Allosterically activated by HslU binding. Functionally, protease subunit of a proteasome-like degradation complex believed to be a general protein degrading machinery. This is ATP-dependent protease subunit HslV from Shewanella putrefaciens (strain CN-32 / ATCC BAA-453).